The sequence spans 354 residues: Serum paraoxonase/lactonase 3 (354 aa).

A glycan (N-linked (GlcNAc...) asparagine) is linked at Asn-29. The cysteines at positions 42 and 352 are disulfide-linked. Ca(2+)-binding residues include Glu-53 and Asp-54. The active-site Proton acceptor is His-114. Ile-116 is a binding site for Ca(2+). Residue Ser-165 is modified to Phosphoserine. Residues Asn-167, Asp-168, Asn-223, Asp-268, and Asn-269 each contribute to the Ca(2+) site. Asn-269 and Asn-323 each carry an N-linked (GlcNAc...) asparagine glycan.

The protein belongs to the paraoxonase family. In terms of assembly, homodimer. Ca(2+) is required as a cofactor. In terms of processing, the signal sequence is not cleaved.

The protein resides in the secreted. Its subcellular location is the extracellular space. The catalysed reaction is a phenyl acetate + H2O = a phenol + acetate + H(+). The enzyme catalyses An aryl dialkyl phosphate + H2O = dialkyl phosphate + an aryl alcohol.. It catalyses the reaction an N-acyl-L-homoserine lactone + H2O = an N-acyl-L-homoserine + H(+). Functionally, has low activity towards the organophosphate paraxon and aromatic carboxylic acid esters. Rapidly hydrolyzes lactones such as statin prodrugs (e.g. lovastatin). Hydrolyzes aromatic lactones and 5- or 6-member ring lactones with aliphatic substituents but not simple lactones or those with polar substituents. This chain is Serum paraoxonase/lactonase 3 (PON3), found in Homo sapiens (Human).